The sequence spans 830 residues: Probable mixed-linked glucan synthase 7 (830 aa).

The next 2 helical transmembrane spans lie at 61-81 (LTIF…ITYA) and 98-118 (AATF…MWVL). Residue D186 is part of the active site. A coiled-coil region spans residues 251 to 279 (ELVRDRRRVRREYEEMRLRIDALQAADAR). Positions 367 and 369 each coordinate substrate. D529 is a catalytic residue. 6 helical membrane passes run 613-633 (LFLM…GGGW), 638-658 (TPTY…VAVL), 676-696 (FWMV…ALKV), 735-755 (ALMA…AAAG), 776-796 (LPVA…LGLM), and 805-825 (PILF…CLLL).

The protein belongs to the glycosyltransferase 2 family. Plant cellulose synthase-like F subfamily. In terms of tissue distribution, expressed in mature pollen.

It localises to the golgi apparatus membrane. May catalyze both beta-1,3 and beta-1,4 glycosidic linkage on beta-D-glucan. Essential for (1,3;1,4)-beta-D-glucans synthesis in grasses and cereals (Poaceae). The mixed-linked glucans (which are not present in walls of dicotyledons or most other monocotyledonous plants) are particularly important constituents of the walls of the starchy endosperm and aleurone cells of cereal grains such as oats, wheat, rice and barley. They can account for up to 70% by weight of the wall. In Oryza sativa subsp. japonica (Rice), this protein is Probable mixed-linked glucan synthase 7 (CSLF7).